The primary structure comprises 833 residues: Probable glucan 1,3-beta-glucosidase D (833 aa).

The segment covering 1–33 (MPTHSRSRDRYGGRDSDREARYDYDYARRRYAT) has biased composition (basic and acidic residues). The interval 1-228 (MPTHSRSRDR…RKRQKKLAVV (228 aa)) is disordered. The Cytoplasmic portion of the chain corresponds to 1-305 (MPTHSRSRDR…GGRPFWKRKR (305 aa)). Over residues 34–45 (DDDDDYDDDELE) the composition is skewed to acidic residues. Basic and acidic residues-rich tracts occupy residues 46–75 (HDLTERRYRRDGYRPPRESRARGYYERDAE) and 97–172 (YGDD…ETAA). The span at 183–196 (SASHLLSADALAKL) shows a compositional bias: low complexity. Positions 200–217 (YEKEERRKREIAKDAAKA) are enriched in basic and acidic residues. Residues 306–326 (WIGLGALIIILVIVIPVAVVV) form a helical; Signal-anchor for type II membrane protein membrane-spanning segment. Over 327 to 833 (SKKHDNKSDP…PDFGDLPEYY (507 aa)) the chain is Extracellular. The segment at 331–353 (DNKSDPADSQGTSPGKSNLDGLS) is disordered. Residue asparagine 332 is glycosylated (N-linked (GlcNAc...) asparagine). Residues 337-346 (ADSQGTSPGK) are compositionally biased toward polar residues. Residues asparagine 378, asparagine 383, asparagine 395, asparagine 548, asparagine 560, and asparagine 569 are each glycosylated (N-linked (GlcNAc...) asparagine). The active-site Proton donor is the glutamate 599. N-linked (GlcNAc...) asparagine glycans are attached at residues asparagine 638, asparagine 671, and asparagine 691. Glutamate 704 functions as the Nucleophile in the catalytic mechanism.

This sequence belongs to the glycosyl hydrolase 5 (cellulase A) family.

It localises to the cell membrane. It carries out the reaction Successive hydrolysis of beta-D-glucose units from the non-reducing ends of (1-&gt;3)-beta-D-glucans, releasing alpha-glucose.. Its function is as follows. Glucosidase involved in the degradation of cellulosic biomass. Active on lichenan. In Aspergillus fumigatus (strain CBS 144.89 / FGSC A1163 / CEA10) (Neosartorya fumigata), this protein is Probable glucan 1,3-beta-glucosidase D (exgD).